The chain runs to 772 residues: Semaphorin-3A (772 aa).

An N-terminal signal peptide occupies residues M1–A20. One can recognise a Sema domain in the interval R31 to L514. N53 carries an N-linked (GlcNAc...) asparagine glycan. A disulfide bridge links C103 with C114. Residue N125 is glycosylated (N-linked (GlcNAc...) asparagine). 4 disulfides stabilise this stretch: C132-C141, C269-C381, C293-C341, and C517-C535. One can recognise an Ig-like C2-type domain in the interval H577–T665. N591 carries N-linked (GlcNAc...) asparagine glycosylation. An intrachain disulfide couples C650 to C723. Residues L677 to E691 show a composition bias toward basic and acidic residues. Disordered stretches follow at residues L677 to P698 and R729 to V772. Over residues R729 to P738 the composition is skewed to basic residues. Residues H750 to V772 show a composition bias toward basic and acidic residues.

Belongs to the semaphorin family. Interacts with PLXND1. As to expression, expressed in the dorsal root ganglia.

It localises to the secreted. Functionally, may be involved in guiding growing axons towards their targets by forming a molecular boundary that instructs axons to engage in the formation of specific nerve tracts. Binds to neuropilin. Involved in the development of the olfactory system and in neuronal control of puberty. The chain is Semaphorin-3A (Sema3a) from Rattus norvegicus (Rat).